The sequence spans 307 residues: MLQRTLAKSISVTGVGLHSGERVALTLHPAPENSGISFRRTDLDGEMGEQIKLTPYLINDTRLSSTIVTDKGVRVGTIEHIMSALSAYGIDNALIELNAPEIPIMDGSSLPFIYLLQDAGVVDQKAQKRFLKILKPVEIKEAGKWVRFTPYDGFKVTLTIEFDHPVFNRSSPTFEIDFAGKSYIDEIARARTFGFMHEVEMMRAHNLGLGGNLNNAIVIDDTDVLNPEGLRYPDEFVRHKILDAIGDLYIVGHPIIGAFEGYKSGHAINNALLRAVLADETAYDRVEFADSDDLPDAFHELNIRTCG.

Residues histidine 80, histidine 239, and aspartate 243 each contribute to the Zn(2+) site. The active-site Proton donor is the histidine 266.

It belongs to the LpxC family. The cofactor is Zn(2+).

It catalyses the reaction a UDP-3-O-[(3R)-3-hydroxyacyl]-N-acetyl-alpha-D-glucosamine + H2O = a UDP-3-O-[(3R)-3-hydroxyacyl]-alpha-D-glucosamine + acetate. The protein operates within glycolipid biosynthesis; lipid IV(A) biosynthesis; lipid IV(A) from (3R)-3-hydroxytetradecanoyl-[acyl-carrier-protein] and UDP-N-acetyl-alpha-D-glucosamine: step 2/6. Its function is as follows. Catalyzes the hydrolysis of UDP-3-O-myristoyl-N-acetylglucosamine to form UDP-3-O-myristoylglucosamine and acetate, the committed step in lipid A biosynthesis. The sequence is that of UDP-3-O-acyl-N-acetylglucosamine deacetylase from Neisseria meningitidis serogroup A / serotype 4A (strain DSM 15465 / Z2491).